The sequence spans 157 residues: SsrA-binding protein (157 aa).

Over residues 138 to 151 (ATEAKRDWGREKQR) the composition is skewed to basic and acidic residues. The segment at 138–157 (ATEAKRDWGREKQRLLKQHS) is disordered.

It belongs to the SmpB family.

The protein resides in the cytoplasm. Its function is as follows. Required for rescue of stalled ribosomes mediated by trans-translation. Binds to transfer-messenger RNA (tmRNA), required for stable association of tmRNA with ribosomes. tmRNA and SmpB together mimic tRNA shape, replacing the anticodon stem-loop with SmpB. tmRNA is encoded by the ssrA gene; the 2 termini fold to resemble tRNA(Ala) and it encodes a 'tag peptide', a short internal open reading frame. During trans-translation Ala-aminoacylated tmRNA acts like a tRNA, entering the A-site of stalled ribosomes, displacing the stalled mRNA. The ribosome then switches to translate the ORF on the tmRNA; the nascent peptide is terminated with the 'tag peptide' encoded by the tmRNA and targeted for degradation. The ribosome is freed to recommence translation, which seems to be the essential function of trans-translation. This Cereibacter sphaeroides (strain ATCC 17025 / ATH 2.4.3) (Rhodobacter sphaeroides) protein is SsrA-binding protein.